Here is a 382-residue protein sequence, read N- to C-terminus: Na(+)/H(+) antiporter NhaA (382 aa).

11 consecutive transmembrane segments (helical) span residues 14–34 (AGGILLVIAAAIAMIIANSSF), 49–69 (MSVSHWINDGLMAVFFLLIGL), 87–107 (IFPAIAAVGGMLAPALVYVAF), 117–137 (GWAIPAATDIAFALGIMALLG), 146–166 (VFLLALAIIDDLGVVVIIAFF), 171–191 (LSVLALVIGFVMTGILFLLNS), 205–225 (FILWVSVLQSGVHATLAGVVL), 247–267 (ALHPYVAFGILPLFAFANAGI), 285–305 (VALGLFLGKPLGIFSFSYVAV), 321–341 (IFAVSVLCGIGFTMSIFISSL), and 356–376 (LGILMGSTLAAVVGYILLHIS).

The protein belongs to the NhaA Na(+)/H(+) (TC 2.A.33) antiporter family.

Its subcellular location is the cell inner membrane. The catalysed reaction is Na(+)(in) + 2 H(+)(out) = Na(+)(out) + 2 H(+)(in). Na(+)/H(+) antiporter that extrudes sodium in exchange for external protons. This chain is Na(+)/H(+) antiporter NhaA, found in Aliivibrio salmonicida (strain LFI1238) (Vibrio salmonicida (strain LFI1238)).